A 474-amino-acid polypeptide reads, in one-letter code: tRNA-2-methylthio-N(6)-dimethylallyladenosine synthase (474 aa).

The MTTase N-terminal domain occupies 3–120 (KKLHIKTWGC…LPEMINSVRG (118 aa)). The [4Fe-4S] cluster site is built by Cys-12, Cys-49, Cys-83, Cys-157, Cys-161, and Cys-164. The 233-residue stretch at 143–375 (RAEGPTAFVS…QERINQQAMA (233 aa)) folds into the Radical SAM core domain. One can recognise a TRAM domain in the interval 378 to 441 (RRMLGTTQRI…PNSLRGKVVR (64 aa)).

This sequence belongs to the methylthiotransferase family. MiaB subfamily. Monomer. Requires [4Fe-4S] cluster as cofactor.

The protein localises to the cytoplasm. It carries out the reaction N(6)-dimethylallyladenosine(37) in tRNA + (sulfur carrier)-SH + AH2 + 2 S-adenosyl-L-methionine = 2-methylsulfanyl-N(6)-dimethylallyladenosine(37) in tRNA + (sulfur carrier)-H + 5'-deoxyadenosine + L-methionine + A + S-adenosyl-L-homocysteine + 2 H(+). Functionally, catalyzes the methylthiolation of N6-(dimethylallyl)adenosine (i(6)A), leading to the formation of 2-methylthio-N6-(dimethylallyl)adenosine (ms(2)i(6)A) at position 37 in tRNAs that read codons beginning with uridine. The sequence is that of tRNA-2-methylthio-N(6)-dimethylallyladenosine synthase from Shigella boydii serotype 4 (strain Sb227).